We begin with the raw amino-acid sequence, 516 residues long: Katanin p60 ATPase-containing subunit A1 (516 aa).

The interval 75–212 (GFKSEPAAPE…DEKKFDPAGY (138 aa)) is disordered. 2 stretches are compositionally biased toward basic and acidic residues: residues 133-143 (ARKDPPRRSEP) and 155-167 (RGGRGPSDRRGDA). Gly residues predominate over residues 168–178 (RSGGGGRGGAR). Positions 179–212 (GSDKDKNRGGKSDKDKKAPSGEEGDEKKFDPAGY) are enriched in basic and acidic residues. 274-281 (GPPGTGKT) provides a ligand contact to ATP.

The protein belongs to the AAA ATPase family. Katanin p60 subunit A1 subfamily. Can homooligomerize into hexameric rings, which may be promoted by interaction with microtubules. Interacts with KATNB1, which may serve as a targeting subunit.

Its subcellular location is the cytoplasm. The protein localises to the cytoskeleton. It localises to the microtubule organizing center. The protein resides in the centrosome. It is found in the spindle pole. The enzyme catalyses n ATP + n H2O + a microtubule = n ADP + n phosphate + (n+1) alpha/beta tubulin heterodimers.. With respect to regulation, ATPase activity is stimulated by microtubules, which promote homooligomerization. ATP-dependent microtubule severing is stimulated by interaction with KATNB1. Functionally, catalytic subunit of a complex which severs microtubules in an ATP-dependent manner. Microtubule severing may promote rapid reorganization of cellular microtubule arrays and the release of microtubules from the centrosome following nucleation. In mitotic spindles this could allow depolymerization of the microtubule end proximal to the centrosome, and subsequent poleward microtubule flux. This is Katanin p60 ATPase-containing subunit A1 from Strongylocentrotus purpuratus (Purple sea urchin).